An 847-amino-acid polypeptide reads, in one-letter code: Guanine nucleotide exchange factor VAV3 (847 aa).

Residues 1 to 119 (MEPWKQCAQW…ETLSRLSRTP (119 aa)) form the Calponin-homology (CH) domain. Tyrosine 141 is subject to Phosphotyrosine. The region spanning 192-371 (IRSCCLAEIK…KDLAQYVNEV (180 aa)) is the DH domain. Residues 400-502 (RPQGDGEIRI…WLEQFEMALS (103 aa)) form the PH domain. The segment at 513 to 562 (FHDFKMHTFTRVTSCKVCQMLLRGTFYQGYLCFKCGARAHKECLGRVDNC) adopts a Phorbol-ester/DAG-type zinc-finger fold. Positions 560–847 (DNCGRVNSGE…FPSTYVEEDE (288 aa)) are sufficient for interaction with ROS1. Residues 592-660 (PGLPKMQVIR…PSDAVKPCPC (69 aa)) enclose the SH3 1 domain. An SH2 domain is found at 672–766 (WYAGAMERLQ…TLDTTLQFPY (95 aa)). The SH3 2 domain maps to 788-847 (KVLGIAIARYDFCARDMRELSLLKGDVVKIYTKMSANGWWRGEVNGRVGWFPSTYVEEDE).

In terms of assembly, interacts with the PH domain of SH2B2. Interacts (via SH2 domains) with the phosphorylated form of EPHA2. Interacts with ROS1; constitutive interaction that mediates VAV3 phosphorylation. Post-translationally, phosphorylated. Phosphorylation can be mediated by ROS1. In osteoclasts, undergoes tyrosine phosphorylation in response to CSF1. As to expression, isoform 1 and isoform 3 are widely expressed; both are expressed at very low levels in skeletal muscle. In keratinocytes, isoform 1 is less abundant than isoform 3. Isoform 3 is detected at very low levels, if any, in adrenal gland, bone marrow, spleen, fetal brain and spinal cord; in these tissues, isoform 1 is readily detectable.

Exchange factor for GTP-binding proteins RhoA, RhoG and, to a lesser extent, Rac1. Binds physically to the nucleotide-free states of those GTPases. Plays an important role in angiogenesis. Its recruitment by phosphorylated EPHA2 is critical for EFNA1-induced RAC1 GTPase activation and vascular endothelial cell migration and assembly. May be important for integrin-mediated signaling, at least in some cell types. In osteoclasts, along with SYK tyrosine kinase, required for signaling through integrin alpha-v/beta-1 (ITAGV-ITGB1), a crucial event for osteoclast proper cytoskeleton organization and function. This signaling pathway involves RAC1, but not RHO, activation. Necessary for proper wound healing. In the course of wound healing, required for the phagocytotic cup formation preceding macrophage phagocytosis of apoptotic neutrophils. Responsible for integrin beta-2 (ITGB2)-mediated macrophage adhesion and, to a lesser extent, contributes to beta-3 (ITGB3)-mediated adhesion. Does not affect integrin beta-1 (ITGB1)-mediated adhesion. The sequence is that of Guanine nucleotide exchange factor VAV3 (VAV3) from Homo sapiens (Human).